The primary structure comprises 1206 residues: DNA-directed RNA polymerase subunit beta' (1206 aa).

Residues Cys-60, Cys-62, Cys-75, and Cys-78 each coordinate Zn(2+). Asp-449, Asp-451, and Asp-453 together coordinate Mg(2+). Residues Cys-818, Cys-892, Cys-899, and Cys-902 each contribute to the Zn(2+) site.

It belongs to the RNA polymerase beta' chain family. In terms of assembly, the RNAP catalytic core consists of 2 alpha, 1 beta, 1 beta' and 1 omega subunit. When a sigma factor is associated with the core the holoenzyme is formed, which can initiate transcription. It depends on Mg(2+) as a cofactor. The cofactor is Zn(2+).

The catalysed reaction is RNA(n) + a ribonucleoside 5'-triphosphate = RNA(n+1) + diphosphate. DNA-dependent RNA polymerase catalyzes the transcription of DNA into RNA using the four ribonucleoside triphosphates as substrates. The polypeptide is DNA-directed RNA polymerase subunit beta' (Shouchella clausii (strain KSM-K16) (Alkalihalobacillus clausii)).